A 1497-amino-acid polypeptide reads, in one-letter code: ABC multidrug transporter C (1497 aa).

Residues 1-13 (MSLLGTINPNINP) are compositionally biased toward polar residues. The tract at residues 1–21 (MSLLGTINPNINPERTVAGRG) is disordered. N-linked (GlcNAc...) asparagine glycans are attached at residues Asn-137 and Asn-336. One can recognise an ABC transporter 1 domain in the interval 158 to 412 (LEVGTLVRRI…FTNMGFECPE (255 aa)). 5 consecutive transmembrane segments (helical) span residues 523 to 543 (LTMSQLIGNFIMALVIGSVFY), 557 to 577 (ALLFFAVLLNAFSSALEILTL), 599 to 621 (AIASMLCDMPYKITNAIIFNLTL), 632 to 652 (GAFFVFLLFSFVTTLTMSMLF), and 665 to 685 (ALVPAAILILGLVIYTGFTIP). The N-linked (GlcNAc...) asparagine glycan is linked to Asn-762. The chain crosses the membrane as a helical span at residues 777–797 (GIMFGFMFFFMFTYLTATEYI). A disordered region spans residues 815–843 (QPTGSHDVEKSPEVSSAAKTDEASSKEAT). The 244-residue stretch at 853–1096 (FQWKDVCYDI…LASYFERNGA (244 aa)) folds into the ABC transporter 2 domain. 889 to 896 (GVSGAGKT) contributes to the ATP binding site. 5 helical membrane passes run 1192-1212 (YIYSKTALCVLTALYIGFSFF), 1226-1246 (FSIFMLMTIFGNLVQQIMPNF), 1273-1293 (IIVELPWNTLMAFLIFVCWYY), 1313-1333 (LMFLLIWSFLLFTSTFAHMMI), and 1352-1372 (LCLIFCGVLAPPQSLPGFWIF). Asn-1411 carries N-linked (GlcNAc...) asparagine glycosylation. Residues 1464–1484 (FGIMWAYIIFNIFAAVFIYWL) traverse the membrane as a helical segment.

The protein belongs to the ABC transporter superfamily. ABCG family. PDR (TC 3.A.1.205) subfamily.

It localises to the cell membrane. It carries out the reaction fluconazole(in) + ATP + H2O = fluconazole(out) + ADP + phosphate + H(+). The enzyme catalyses itraconazole(in) + ATP + H2O = itraconazole(out) + ADP + phosphate + H(+). It catalyses the reaction voriconazole(in) + ATP + H2O = voriconazole(out) + ADP + phosphate + H(+). Its activity is regulated as follows. The efflux inhibitor FK506 impairs the transport activity. In terms of biological role, pleiotropic ABC efflux transporter that shows a strong substrate specificity for the azole class of drugs such as lotrimazole (CLT), fluconazole (FLC), itraconazole (ITC), ketoconazole (KTC), posaconazole (POS), tebuconazole (TEBZ), and voriconazole (VRC). Is also able to transport rhodamine 6G (R-6G), a known substrate for many ABC transporters. Required for normal pathogenesis in a Galleria mellonella (greater wax moth) infection model. The sequence is that of ABC multidrug transporter C from Aspergillus fumigatus (strain ATCC MYA-4609 / CBS 101355 / FGSC A1100 / Af293) (Neosartorya fumigata).